The primary structure comprises 387 residues: Homoserine O-succinyltransferase (387 aa).

One can recognise an AB hydrolase-1 domain in the interval 49-358 (NAILICHALS…DAEQGHDSFL (310 aa)). Catalysis depends on S156, which acts as the Nucleophile. A substrate-binding site is contributed by R226. Active-site residues include D321 and H354. D355 contacts substrate.

The protein belongs to the AB hydrolase superfamily. MetX family. Homodimer.

It localises to the cytoplasm. The catalysed reaction is L-homoserine + succinyl-CoA = O-succinyl-L-homoserine + CoA. The protein operates within amino-acid biosynthesis; L-methionine biosynthesis via de novo pathway; O-succinyl-L-homoserine from L-homoserine: step 1/1. Requires MetW for activity. Transfers a succinyl group from succinyl-CoA to L-homoserine, forming succinyl-L-homoserine. The protein is Homoserine O-succinyltransferase of Acinetobacter baylyi (strain ATCC 33305 / BD413 / ADP1).